The following is a 210-amino-acid chain: Dynein regulatory complex protein 12 (210 aa).

The disordered stretch occupies residues 1–23; the sequence is MPPKNKEKGKKSGAQKKKKNWGA. Residues 7–20 show a composition bias toward basic residues; the sequence is EKGKKSGAQKKKKN. Positions 49–161 form a coiled coil; that stretch reads RDEARRAKAS…EAKYEEILHD (113 aa). Positions 188–210 are disordered; that stretch reads HKEQQRQFGLTPPGSLRPPAPSL.

The protein belongs to the DRC12 family. As to quaternary structure, component of the nexin-dynein regulatory complex (N-DRC).

The protein localises to the cytoplasm. Its subcellular location is the cytoskeleton. It localises to the flagellum axoneme. Functionally, component of the nexin-dynein regulatory complex (N-DRC), a key regulator of ciliary/flagellar motility which maintains the alignment and integrity of the distal axoneme and regulates microtubule sliding in motile axonemes. This Homo sapiens (Human) protein is Dynein regulatory complex protein 12.